The primary structure comprises 323 residues: Mycothiol acetyltransferase (323 aa).

E44 provides a ligand contact to 1D-myo-inositol 2-(L-cysteinylamino)-2-deoxy-alpha-D-glucopyranoside. 2 N-acetyltransferase domains span residues 77–176 (GQDL…VSLR) and 173–323 (VSLR…VKEG). Acetyl-CoA is bound at residue 98–100 (IAV). E200, K240, and E253 together coordinate 1D-myo-inositol 2-(L-cysteinylamino)-2-deoxy-alpha-D-glucopyranoside. Residues 257-259 (VGV) and 264-270 (QGSGLGK) contribute to the acetyl-CoA site. Y291 contributes to the 1D-myo-inositol 2-(L-cysteinylamino)-2-deoxy-alpha-D-glucopyranoside binding site.

This sequence belongs to the acetyltransferase family. MshD subfamily. Monomer.

The catalysed reaction is 1D-myo-inositol 2-(L-cysteinylamino)-2-deoxy-alpha-D-glucopyranoside + acetyl-CoA = mycothiol + CoA + H(+). Functionally, catalyzes the transfer of acetyl from acetyl-CoA to desacetylmycothiol (Cys-GlcN-Ins) to form mycothiol. The sequence is that of Mycothiol acetyltransferase from Pseudarthrobacter chlorophenolicus (strain ATCC 700700 / DSM 12829 / CIP 107037 / JCM 12360 / KCTC 9906 / NCIMB 13794 / A6) (Arthrobacter chlorophenolicus).